A 102-amino-acid chain; its full sequence is Small ribosomal subunit protein uS10 (102 aa).

Belongs to the universal ribosomal protein uS10 family. In terms of assembly, part of the 30S ribosomal subunit.

In terms of biological role, involved in the binding of tRNA to the ribosomes. The sequence is that of Small ribosomal subunit protein uS10 from Kosmotoga olearia (strain ATCC BAA-1733 / DSM 21960 / TBF 19.5.1).